Reading from the N-terminus, the 424-residue chain is UDP-N-acetylglucosamine 1-carboxyvinyltransferase (424 aa).

Lysine 22–asparagine 23 is a binding site for phosphoenolpyruvate. UDP-N-acetyl-alpha-D-glucosamine is bound at residue arginine 93. The active-site Proton donor is cysteine 117. 2-(S-cysteinyl)pyruvic acid O-phosphothioketal is present on cysteine 117. UDP-N-acetyl-alpha-D-glucosamine is bound by residues arginine 122 to leucine 126, aspartate 307, and isoleucine 329.

It belongs to the EPSP synthase family. MurA subfamily.

The protein resides in the cytoplasm. It carries out the reaction phosphoenolpyruvate + UDP-N-acetyl-alpha-D-glucosamine = UDP-N-acetyl-3-O-(1-carboxyvinyl)-alpha-D-glucosamine + phosphate. It functions in the pathway cell wall biogenesis; peptidoglycan biosynthesis. Functionally, cell wall formation. Adds enolpyruvyl to UDP-N-acetylglucosamine. This is UDP-N-acetylglucosamine 1-carboxyvinyltransferase from Chlorobaculum parvum (strain DSM 263 / NCIMB 8327) (Chlorobium vibrioforme subsp. thiosulfatophilum).